Reading from the N-terminus, the 898-residue chain is Interleukin enhancer-binding factor 3 (898 aa).

In terms of domain architecture, DZF spans 5–378 (RIFVNDDRHV…PMKRPMEEDG (374 aa)). Residues 52-85 (QEKGNSELSEAENMDTPPDDESKEGAGEQKAEHM) form a disordered region. A compositionally biased stretch (acidic residues) spans 60-73 (SEAENMDTPPDDES). Phosphothreonine is present on T67. Residues 74–85 (KEGAGEQKAEHM) are compositionally biased toward basic and acidic residues. An N6-acetyllysine modification is found at K100. T188 carries the post-translational modification Phosphothreonine; by PKR. S190 bears the Phosphoserine mark. A Glycyl lysine isopeptide (Lys-Gly) (interchain with G-Cter in ubiquitin) cross-link involves residue K297. T315 is subject to Phosphothreonine; by PKR. A Glycyl lysine isopeptide (Lys-Gly) (interchain with G-Cter in SUMO1) cross-link involves residue K348. The tract at residues 363-402 (TTYAITPMKRPMEEDGEEKSPSKKKKKIQKKEEKADPPQA) is disordered. Residues 371–389 (KRPMEEDGEEKSPSKKKKK) carry the Bipartite nuclear localization signal motif. Residues 372–383 (RPMEEDGEEKSP) are compositionally biased toward basic and acidic residues. 2 positions are modified to phosphoserine: S382 and S384. Residue K396 forms a Glycyl lysine isopeptide (Lys-Gly) (interchain with G-Cter in SUMO2) linkage. The DRBM 1 domain maps to 398–467 (DPPQAMNALM…AVKVLQDMGL (70 aa)). The residue at position 460 (K460) is an N6-acetyllysine. Disordered regions lie at residues 466-495 (GLPT…IVAP) and 505-524 (PSSV…LTKH). The span at 472–481 (EGRDSSKGED) shows a compositional bias: basic and acidic residues. A phosphoserine mark is found at S476, S477, S482, and S486. Residue K489 forms a Glycyl lysine isopeptide (Lys-Gly) (interchain with G-Cter in SUMO2) linkage. Residues 524–590 (HGKNPVMELN…ALAALEKLFP (67 aa)) enclose the DRBM 2 domain. The residue at position 592 (T592) is a Phosphothreonine. The interval 609 to 898 (RGGPKFAAKP…TEHSMNYQYR (290 aa)) is interaction with PRMT1. 2 disordered regions span residues 631 to 661 (NEVP…GGAN) and 719 to 898 (QGDS…YQYR). Residues 644–661 (RGGNIRGRGRGRGFGGAN) are compositionally biased toward gly residues. 3 stretches are compositionally biased toward low complexity: residues 745-769 (SYSS…SSYG), 783-794 (GSYSSYSNSYNS), and 802-812 (DYSYDSKFNYS). S794, S812, S814, and S818 each carry phosphoserine. Residues 813 to 822 (GSGGRSGGNS) show a composition bias toward gly residues. Residues 823–834 (YGSSGSSSYNTG) are compositionally biased toward low complexity. Residues 835-845 (SHGGYGTGSGG) are compositionally biased toward gly residues. The span at 846-886 (SSSYQGKQGGYSSQSNYSSPGSSQSYSGPASSYQSSQGGYS) shows a compositional bias: low complexity.

Identified in a IGF2BP1-dependent mRNP granule complex containing untranslated mRNAs. Interacts with FUS and SMN. Interacts (via C-terminus) with PRMT1. Forms a complex with ILF2. Can also bind to PRKDC/XRCC7: this may stabilize the interaction of PRKDC/XRCC7 and the heterodimeric complex of XRCC6/KU70 and XRCC5/KU80. Forms a heteromeric complex with ZNF346 and ILF3. Found in a nuclear export complex with XPO5, ILF3, Ran and double-stranded RNA or double-stranded minihelix VA1 RNA. Found in a nuclear export complex with XPO5, RAN, ILF3, ZNF346 and double-stranded RNA. Interacts with XPO5 and ZNF346. Forms a complex with ILF2, YLPM1, KHDRBS1, RBMX, NCOA5 and PPP1CA. Interacts with AGO1 and AGO2. Interacts with DHX36; this interaction occurs in a RNA-dependent manner. Interacts with ELAVL1; this interaction occurs in a RNA-dependent manner. Interacts with HAVCR2; this interaction promotes ILF3 ubiquitination and subsequent degradation. Post-translationally, phosphorylated at Thr-188 and Thr-315 by PKR in response to RNA viruses. This phosphorylation results in the dissociation of ILF2 from the ILF2-ILF3 complex resulting in a cytoplasmic sequestration of ILF3 where it can bind to viral RNAs and impede viral replication. In terms of processing, methylated by protein arginine N-methyltransferase 1. In terms of tissue distribution, ubiquitous. Expressed at high levels in the thymus, testis, ovary and at lower levelss in the spleen.

Its subcellular location is the nucleus. It localises to the nucleolus. The protein resides in the cytoplasm. Its function is as follows. RNA-binding protein that plays an essential role in the biogenesis of circular RNAs (circRNAs) which are produced by back-splicing circularization of pre-mRNAs. Within the nucleus, promotes circRNAs processing by stabilizing the regulatory elements residing in the flanking introns of the circularized exons. Plays thereby a role in the back-splicing of a subset of circRNAs. As a consequence, participates in a wide range of transcriptional and post-transcriptional processes. Binds to poly-U elements and AU-rich elements (AREs) in the 3'-UTR of target mRNAs. Upon viral infection, ILF3 accumulates in the cytoplasm and participates in the innate antiviral response. Mechanistically, ILF3 becomes phosphorylated and activated by the double-stranded RNA-activated protein kinase/PKR which releases ILF3 from cellular mature circRNAs. In turn, unbound ILF3 molecules are able to interact with and thus inhibit viral mRNAs. The sequence is that of Interleukin enhancer-binding factor 3 (Ilf3) from Mus musculus (Mouse).